A 179-amino-acid polypeptide reads, in one-letter code: ATP-dependent protease subunit HslV (179 aa).

Thr7 is a catalytic residue. Positions 162, 165, and 168 each coordinate Na(+).

The protein belongs to the peptidase T1B family. HslV subfamily. As to quaternary structure, a double ring-shaped homohexamer of HslV is capped on each side by a ring-shaped HslU homohexamer. The assembly of the HslU/HslV complex is dependent on binding of ATP.

It is found in the cytoplasm. The enzyme catalyses ATP-dependent cleavage of peptide bonds with broad specificity.. Its activity is regulated as follows. Allosterically activated by HslU binding. Functionally, protease subunit of a proteasome-like degradation complex believed to be a general protein degrading machinery. The polypeptide is ATP-dependent protease subunit HslV (Nitrosococcus oceani (strain ATCC 19707 / BCRC 17464 / JCM 30415 / NCIMB 11848 / C-107)).